The following is a 429-amino-acid chain: FAD-dependent monooxygenase azaH (429 aa).

Residues 5-25 (SIEVAIIGAGITGITLALGLL) form a helical membrane-spanning segment. Residues E35 and G48 each coordinate FAD. 2 N-linked (GlcNAc...) asparagine glycosylation sites follow: N75 and N87. Residue R116 coordinates FAD. Residue R199 is part of the active site. FAD-binding residues include D315 and A328.

Belongs to the paxM FAD-dependent monooxygenase family. FAD serves as cofactor.

The protein resides in the membrane. It participates in secondary metabolite biosynthesis. Its function is as follows. FAD-dependent monooxygenase; part of the gene cluster that mediates the biosynthesis of azaphilones, a class of fungal metabolites characterized by a highly oxygenated pyrano-quinone bicyclic core and exhibiting a broad range of bioactivities. In the first step, the non-reducing polyketide synthase azaA forms the hexaketide precursor from successive condensations of five malonyl-CoA units, presumably with a simple acetyl-CoA starter unit. The reactive polyketide chain then undergoes a PT-mediated C2-C7 cyclization to afford the aromatic ring and is eventually released as an aldehyde through the R-domain. The putative ketoreductase azaE is proposed to catalyze the reduction of the terminal ketone resulting in the early culture product FK17-P2a. The monooxygenase azaH was demonstrated to be the only enzyme required to convert FK17-P2a to azanigerone E. AzaH first hydroxylates the benzaldehyde intermediate FK17-P2a at C4, which triggers the formation of the pyran-ring to afford azanigerone E. In parallel, the 2,4-dimethylhexanoyl chain is synthesized by the HR-PKS azaB and is proposed to be transferred to the C4-hydroxyl of azanigerone E by the acyltransferase azaD directly from the ACP domain of azaB. Alternatively, the 2,4-dimethyl-hexanoyl chain may be offloaded from the HR-PKS as a carboxylic acid and converted to an acyl-CoA by azaF. The resulting acyl-CoA molecule could then be taken up as a substrate by AzaD to form azanigerone B. To yield the carboxylic acid substituent in azanigerone A, the hydroxypropyl side chain of azanigerone B would need to undergo a C-C oxidative cleavage catalyzed by cytochrome P450 AzaI. AzaI is proposed to act on a vicinal diol that leads to a C-C bond scission either through an alkoxyradical intermediate or a peroxy complex. In the biosynthesis of azanigerone A, azanigerone B first undergoes hydroxylation at C10, possibly catalyzed by one of the two FAD-dependent monooxygenases encoded in the cluster, azaG or azaL, resulting in the vicinal diol azanigerone C. Oxidative cleavage of azanigerone C by azaI would yield the corresponding aldehyde derivative of azanigerone A. Finally, the dehydrogenase azaJ is proposed to convert the aldehyde functional group into the carboxylic acid, completing the conversion from azanigerone B to azanigerone A. Alternatively, the oxidation of aldehyde to carboxylic acid may be catalyzed by the same P450 enzyme azaI via consecutive oxidation or by endogenous alcohol dehydrogenase. This chain is FAD-dependent monooxygenase azaH, found in Aspergillus niger (strain ATCC 1015 / CBS 113.46 / FGSC A1144 / LSHB Ac4 / NCTC 3858a / NRRL 328 / USDA 3528.7).